A 460-amino-acid polypeptide reads, in one-letter code: Putative arginine/ornithine antiporter (460 aa).

The Cytoplasmic portion of the chain corresponds to Met1–Lys4. Residues Leu5–Ser25 traverse the membrane as a helical segment. Over Leu26–Ala38 the chain is Periplasmic. Residues Leu39–Ile59 form a helical membrane-spanning segment. The Cytoplasmic portion of the chain corresponds to Leu60–Trp92. Residues Leu93–Phe113 form a helical membrane-spanning segment. Topologically, residues Thr114 to Gly125 are periplasmic. A helical transmembrane segment spans residues Asn126–Leu146. Over Arg147–Leu157 the chain is Cytoplasmic. Residues Val158 to Phe178 traverse the membrane as a helical segment. The Periplasmic segment spans residues Lys179–Lys201. Residues Asn202–Ala222 traverse the membrane as a helical segment. Topologically, residues Arg223–Leu235 are cytoplasmic. The chain crosses the membrane as a helical span at residues Leu236–Val256. The Periplasmic segment spans residues Ala257 to Glu282. A helical transmembrane segment spans residues Ile283–Met303. Residues Ala304 to Ser331 lie on the Cytoplasmic side of the membrane. Residues Ala332 to Gly352 traverse the membrane as a helical segment. At Ser353 to Thr357 the chain is on the periplasmic side. Residues Leu358–Leu378 form a helical membrane-spanning segment. The Cytoplasmic portion of the chain corresponds to Lys379–Pro384. The next 2 helical transmembrane spans lie at Leu385 to Gly405 and Pro406 to Ala426. Topologically, residues Arg427–Gln439 are cytoplasmic. A helical membrane pass occupies residues Glu440–Gly460.

This sequence belongs to the amino acid-polyamine-organocation (APC) superfamily. Basic amino acid/polyamine antiporter (APA) (TC 2.A.3.2) family.

Its subcellular location is the cell inner membrane. It carries out the reaction L-ornithine(in) + L-arginine(out) = L-ornithine(out) + L-arginine(in). Functionally, catalyzes electroneutral exchange between arginine and ornithine to allow high-efficiency energy conversion in the arginine deiminase pathway. This chain is Putative arginine/ornithine antiporter (ydgI), found in Escherichia coli O6:H1 (strain CFT073 / ATCC 700928 / UPEC).